We begin with the raw amino-acid sequence, 428 residues long: Peptidase B (428 aa).

The Mn(2+) site is built by Lys-195 and Asp-200. Lys-207 is an active-site residue. Residues Asp-218, Asp-277, and Glu-279 each coordinate Mn(2+). Arg-281 is an active-site residue.

This sequence belongs to the peptidase M17 family. As to quaternary structure, homohexamer. Mn(2+) serves as cofactor.

It localises to the cytoplasm. It carries out the reaction Release of an N-terminal amino acid, Xaa, from a peptide or arylamide. Xaa is preferably Glu or Asp but may be other amino acids, including Leu, Met, His, Cys and Gln.. Probably plays an important role in intracellular peptide degradation. The chain is Peptidase B from Enterobacter sp. (strain 638).